The following is a 347-amino-acid chain: (RS)-norcoclaurine 6-O-methyltransferase (347 aa).

The S-adenosyl-L-methionine site is built by glycine 192, aspartate 215, aspartate 235, methionine 236, and lysine 249. Histidine 253 (proton acceptor) is an active-site residue.

The protein belongs to the class I-like SAM-binding methyltransferase superfamily. Cation-independent O-methyltransferase family. COMT subfamily. As to quaternary structure, homodimer.

It carries out the reaction norcoclaurine + S-adenosyl-L-methionine = coclaurine + S-adenosyl-L-homocysteine + H(+). The protein operates within alkaloid biosynthesis; (S)-reticuline biosynthesis; (S)-reticuline from (S)-norcoclaurine: step 1/4. Catalyzes the transfer of the S-methyl group of S-adenosyl-L-methionine (AdoMet) to the 6-hydroxyl group of norcoclaurine to form coclaurine. The polypeptide is (RS)-norcoclaurine 6-O-methyltransferase (Coptis japonica (Japanese goldthread)).